A 485-amino-acid polypeptide reads, in one-letter code: Cobyric acid synthase (485 aa).

Positions 248-435 constitute a GATase cobBQ-type domain; that stretch reads VLKVVVPVLP…LHGLFESPDA (188 aa). Cysteine 329 serves as the catalytic Nucleophile. Histidine 427 is an active-site residue.

Belongs to the CobB/CobQ family. CobQ subfamily.

Its pathway is cofactor biosynthesis; adenosylcobalamin biosynthesis. In terms of biological role, catalyzes amidations at positions B, D, E, and G on adenosylcobyrinic A,C-diamide. NH(2) groups are provided by glutamine, and one molecule of ATP is hydrogenolyzed for each amidation. This Stutzerimonas stutzeri (strain A1501) (Pseudomonas stutzeri) protein is Cobyric acid synthase.